A 350-amino-acid chain; its full sequence is Vetispiradiene synthase 3 (350 aa).

Residues aspartate 103, aspartate 107, aspartate 246, threonine 250, and glutamate 254 each contribute to the Mg(2+) site. Residues 103–107 carry the DDXXD motif motif; that stretch reads DDTFD.

Belongs to the terpene synthase family. Tpsa subfamily. It depends on Mg(2+) as a cofactor.

Its subcellular location is the cytoplasm. The enzyme catalyses (2E,6E)-farnesyl diphosphate = (-)-vetispiradiene + diphosphate. Its pathway is secondary metabolite biosynthesis; terpenoid biosynthesis. Functionally, sesquiterpene synthase that catalyzes the formation of vetispiradiene from trans,trans-farnesyl diphosphate. The initial internal cyclization produces the monocyclic intermediate germacrene A. This Hyoscyamus muticus (Egyptian henbane) protein is Vetispiradiene synthase 3.